A 675-amino-acid chain; its full sequence is MAKHGADEPSSRSGSPDREGRASEDRSLLHQRLAVRELIDTEVSYLHMLQLCASDIRSRLQQLPQGDLDVLFSNIDDIIKVNSRFLHDLQETASKEEEQVQLVGNIFLEFQEELEQVYKVYCASYDQALLLVDTYRKEPELQRHIQGIVEAVVPQAGSSGLSFLLVIPLQRITRYPLLLQKILENTVPDASAYPVLQRAVSALQDVNTNINEYKMRKEVASKYTKVEQLTLRERLARINTHTLSKKTTRLSQLLKQEAGLIPRTEDKEFDDLEERFQWVSLCVTELKNNVAAYLDNLQAFLYFRPHEYNLDIPEGPAVQYCNLARDLHLEAFLKFKQRLEGLVWQPLCSLAKALLGPQNLIKKRLDKLLDFERVEEKLLEVGSVTYQEEAARHTYQALNSLLVAELPQFNQLVMQWLGQIMCTFVTLQRDLAKQVLQRAEGSMAQLPHHHVPEPAFRKLVEDALGRTSNQLRSFQETFEKVQPPPTTQPLLPGSERQVQALLSRYGPGKLYQVTSNISGTGTLDLTLPRGQIVAILQNKDTKGNSGRWLVDTGGHRGYVPAGKLQLYHVVPSAEELRRQAGLNKDPRCLTPEPSPALVPSIPTMNQVIAAYPFVARSSHEVSLQAGQPVTILEAQDKKGNPEWSLVEVNGQRGYVPSGFLARARSPVLWGWSLPS.

The segment at 1–26 (MAKHGADEPSSRSGSPDREGRASEDR) is disordered. Positions 30 to 213 (HQRLAVRELI…QDVNTNINEY (184 aa)) constitute a DH domain. The BAR domain maps to 254-455 (LKQEAGLIPR…LPHHHVPEPA (202 aa)). 2 consecutive SH3 domains span residues 506–569 (GPGK…LYHV) and 602–665 (PTMN…RARS).

Its function is as follows. May act as a guanine nucleotide exchange factor (GEF). The polypeptide is Rho guanine nucleotide exchange factor 37 (ARHGEF37) (Homo sapiens (Human)).